The primary structure comprises 292 residues: 5,10-methylenetetrahydrofolate reductase (292 aa).

Glu-28 acts as the Proton donor/acceptor in catalysis. Thr-59 provides a ligand contact to NADH. FAD-binding residues include Tyr-60, Ala-62, His-88, Arg-118, Gly-119, Asp-120, Ala-132, Tyr-152, His-156, Asp-165, Asn-168, Lys-171, and Lys-172. Asp-120 serves as a coordination point for (6S)-5-methyl-5,6,7,8-tetrahydrofolate. Gln-183 serves as a coordination point for NADH. Residues Gln-183, Gln-219, and Lys-279 each coordinate (6S)-5-methyl-5,6,7,8-tetrahydrofolate.

It belongs to the methylenetetrahydrofolate reductase family. FAD serves as cofactor.

It catalyses the reaction (6S)-5-methyl-5,6,7,8-tetrahydrofolate + NAD(+) = (6R)-5,10-methylene-5,6,7,8-tetrahydrofolate + NADH + H(+). The protein operates within one-carbon metabolism; tetrahydrofolate interconversion. It participates in amino-acid biosynthesis; L-methionine biosynthesis via de novo pathway. In terms of biological role, catalyzes the NADH-dependent reduction of 5,10-methylenetetrahydrofolate to 5-methyltetrahydrofolate. Is required to provide the methyl group necessary for methionine synthetase to convert homocysteine to methionine; the methyl group is given by 5-methyltetrahydrofolate. The chain is 5,10-methylenetetrahydrofolate reductase (metF) from Buchnera aphidicola subsp. Schizaphis graminum (strain Sg).